Reading from the N-terminus, the 504-residue chain is Arabinose import ATP-binding protein AraG (504 aa).

ABC transporter domains are found at residues Leu8 to Arg243 and Tyr256 to Val499. ATP is bound at residue Gly40–Ser47.

The protein belongs to the ABC transporter superfamily. Arabinose importer (TC 3.A.1.2.2) family. The complex is composed of two ATP-binding proteins (AraG), two transmembrane proteins (AraH) and a solute-binding protein (AraF).

Its subcellular location is the cell inner membrane. It catalyses the reaction L-arabinose(out) + ATP + H2O = L-arabinose(in) + ADP + phosphate + H(+). Part of the ABC transporter complex AraFGH involved in arabinose import. Responsible for energy coupling to the transport system. The chain is Arabinose import ATP-binding protein AraG from Escherichia coli O6:K15:H31 (strain 536 / UPEC).